A 109-amino-acid chain; its full sequence is Large ribosomal subunit protein P1A (109 aa).

Over residues 69-84 the composition is skewed to low complexity; it reads APVAGGAAAPAAADGE. Residues 69-109 form a disordered region; that stretch reads APVAGGAAAPAAADGEAPAEEKEEAKEEEESDEDMGFGLFD. Residues 94–103 are compositionally biased toward acidic residues; sequence KEEEESDEDM.

It belongs to the eukaryotic ribosomal protein P1/P2 family. In terms of assembly, component of the large ribosomal subunit (LSU). Mature yeast ribosomes consist of a small (40S) and a large (60S) subunit. The 40S small subunit contains 1 molecule of ribosomal RNA (18S rRNA) and at least 33 different proteins. The large 60S subunit contains 3 rRNA molecules (25S, 5.8S and 5S rRNA) and at least 46 different proteins. The acidic ribosomal P-proteins form the stalk structure of the 60S subunit. They are organized as a pentameric complex in which uL10/P0 interacts with 2 heterodimers of P1 and P2 proteins.

It is found in the cytoplasm. Its function is as follows. Component of the ribosome, a large ribonucleoprotein complex responsible for the synthesis of proteins in the cell. The small ribosomal subunit (SSU) binds messenger RNAs (mRNAs) and translates the encoded message by selecting cognate aminoacyl-transfer RNA (tRNA) molecules. The large subunit (LSU) contains the ribosomal catalytic site termed the peptidyl transferase center (PTC), which catalyzes the formation of peptide bonds, thereby polymerizing the amino acids delivered by tRNAs into a polypeptide chain. The nascent polypeptides leave the ribosome through a tunnel in the LSU and interact with protein factors that function in enzymatic processing, targeting, and the membrane insertion of nascent chains at the exit of the ribosomal tunnel. The chain is Large ribosomal subunit protein P1A (rpp101) from Schizosaccharomyces pombe (strain 972 / ATCC 24843) (Fission yeast).